The primary structure comprises 271 residues: Cell division protein FtsQ (271 aa).

Positions methionine 1–phenylalanine 37 are disordered. The Cytoplasmic segment spans residues methionine 1–arginine 43. Residues alanine 8–serine 24 show a composition bias toward low complexity. Residues alanine 44–glycine 64 form a helical membrane-spanning segment. Residues serine 65–serine 271 are Extracellular-facing. Residues phenylalanine 68–arginine 137 form the POTRA domain.

This sequence belongs to the FtsQ/DivIB family. FtsQ subfamily.

It is found in the cell membrane. Its function is as follows. Essential cell division protein. This Streptomyces venezuelae (strain ATCC 10712 / CBS 650.69 / DSM 40230 / JCM 4526 / NBRC 13096 / PD 04745) protein is Cell division protein FtsQ.